We begin with the raw amino-acid sequence, 312 residues long: Heterotepalin-4 (312 aa).

The N-terminal stretch at 1 to 22 is a signal peptide; it reads MKSMLVVTISVWLILAPTSTWA. Disulfide bonds link cysteine 56-cysteine 280 and cysteine 107-cysteine 128. Glutamate 197 is an active-site residue. The propeptide occupies 284–312; the sequence is YNQNAMFPQLIMSTYYNYMANLGDLFEEF.

The catalysed reaction is Endohydrolysis of the N-glycosidic bond at one specific adenosine on the 28S rRNA.. Inhibits protein synthesis in vitro. The sequence is that of Heterotepalin-4 from Phytolacca heterotepala (Mexican pokeweed).